A 153-amino-acid chain; its full sequence is 3-hydroxyacyl-[acyl-carrier-protein] dehydratase FabZ (153 aa).

Residue His54 is part of the active site.

It belongs to the thioester dehydratase family. FabZ subfamily.

Its subcellular location is the cytoplasm. The enzyme catalyses a (3R)-hydroxyacyl-[ACP] = a (2E)-enoyl-[ACP] + H2O. Its function is as follows. Involved in unsaturated fatty acids biosynthesis. Catalyzes the dehydration of short chain beta-hydroxyacyl-ACPs and long chain saturated and unsaturated beta-hydroxyacyl-ACPs. The sequence is that of 3-hydroxyacyl-[acyl-carrier-protein] dehydratase FabZ from Shewanella loihica (strain ATCC BAA-1088 / PV-4).